The chain runs to 426 residues: Protein FAM181B (426 aa).

Disordered regions lie at residues 106–157 and 226–246; these read GLMG…AAAA and NLPPSFFTEPSRAGGGGCGPS. Over residues 128-141 the composition is skewed to low complexity; the sequence is PLAAPSAPTVAAPA.

Belongs to the FAM181 family.

This is Protein FAM181B (FAM181B) from Homo sapiens (Human).